We begin with the raw amino-acid sequence, 349 residues long: GTP 3',8-cyclase (349 aa).

One can recognise a Radical SAM core domain in the interval 24–250 (PFGRAVTYLR…DIPYRTGGPA (227 aa)). Arginine 33 contributes to the GTP binding site. [4Fe-4S] cluster is bound by residues cysteine 40 and cysteine 44. An S-adenosyl-L-methionine-binding site is contributed by tyrosine 46. Cysteine 47 provides a ligand contact to [4Fe-4S] cluster. Arginine 82 is a binding site for GTP. Residue glycine 86 participates in S-adenosyl-L-methionine binding. Threonine 116 serves as a coordination point for GTP. Serine 140 contacts S-adenosyl-L-methionine. GTP is bound at residue lysine 176. Methionine 210 serves as a coordination point for S-adenosyl-L-methionine. Residues cysteine 273 and cysteine 276 each coordinate [4Fe-4S] cluster. 278 to 280 (RVR) contributes to the GTP binding site. A [4Fe-4S] cluster-binding site is contributed by cysteine 290.

Belongs to the radical SAM superfamily. MoaA family. In terms of assembly, monomer and homodimer. The cofactor is [4Fe-4S] cluster.

The catalysed reaction is GTP + AH2 + S-adenosyl-L-methionine = (8S)-3',8-cyclo-7,8-dihydroguanosine 5'-triphosphate + 5'-deoxyadenosine + L-methionine + A + H(+). Its pathway is cofactor biosynthesis; molybdopterin biosynthesis. Catalyzes the cyclization of GTP to (8S)-3',8-cyclo-7,8-dihydroguanosine 5'-triphosphate. The sequence is that of GTP 3',8-cyclase from Rhizobium meliloti (strain 1021) (Ensifer meliloti).